The sequence spans 267 residues: MAAEEEAAPLSGVGWAAGPESAPAGWSVITISVEGSAANLGKGFGHKGGYLCVSTAAPGSAGPVVTDVQVLSDRNPQPAGYSRAPEFPEPRSGVSRKKRLYVRLQPRGAAETAVFDIKLSGKSRAVPQYMKIGEIGSFAIWCKKGALPQCSPPPVPKPRTVSLGLKQLSLADSEQQAPGKPVAQSGSRHASFTLHNSADDGSSIYNLSAMDGVPFTLHPKFERSPKSDSSAILTDLTVKSLADIEKEYNYTFVVERTAAARLPPSIC.

The region spanning 7–146 (AAPLSGVGWA…SFAIWCKKGA (140 aa)) is the MABP domain. The SH3-binding signature appears at 154-159 (PVPKPR). In terms of domain architecture, UMA spans 210–259 (MDGVPFTLHPKFERSPKSDSSAILTDLTVKSLADIEKEYNYTFVVERTAA).

The protein belongs to the MVB12 family. As to quaternary structure, component of the ESCRT-I complex (endosomal sorting complex required for transport I).

The protein localises to the cytoplasm. It is found in the endosome. The protein resides in the late endosome membrane. Functionally, component of the ESCRT-I complex, a regulator of vesicular trafficking process. Required for the sorting of endocytic ubiquitinated cargos into multivesicular bodies. This Gallus gallus (Chicken) protein is Multivesicular body subunit 12A (MVB12A).